Here is a 327-residue protein sequence, read N- to C-terminus: UPF0285 protein Maeo_0978 (327 aa).

Belongs to the UPF0285 family.

The polypeptide is UPF0285 protein Maeo_0978 (Methanococcus aeolicus (strain ATCC BAA-1280 / DSM 17508 / OCM 812 / Nankai-3)).